Here is a 231-residue protein sequence, read N- to C-terminus: ATP phosphoribosyltransferase (231 aa).

It belongs to the ATP phosphoribosyltransferase family. Short subfamily. Heteromultimer composed of HisG and HisZ subunits.

The protein resides in the cytoplasm. The catalysed reaction is 1-(5-phospho-beta-D-ribosyl)-ATP + diphosphate = 5-phospho-alpha-D-ribose 1-diphosphate + ATP. It participates in amino-acid biosynthesis; L-histidine biosynthesis; L-histidine from 5-phospho-alpha-D-ribose 1-diphosphate: step 1/9. In terms of biological role, catalyzes the condensation of ATP and 5-phosphoribose 1-diphosphate to form N'-(5'-phosphoribosyl)-ATP (PR-ATP). Has a crucial role in the pathway because the rate of histidine biosynthesis seems to be controlled primarily by regulation of HisG enzymatic activity. The polypeptide is ATP phosphoribosyltransferase (Brucella suis biovar 1 (strain 1330)).